Consider the following 498-residue polypeptide: Osteoclast stimulatory transmembrane protein (498 aa).

At 1–51 (MRTIRAATEHLFGLGWKFWRLGICKAVVPLQAAWKAFSQPVPASCNELLTQ) the chain is on the cytoplasmic side. The helical transmembrane segment at 52-72 (LLLCVSLASLIAGLAHHWLVS) threads the bilayer. At 73–81 (LQLYPLGPP) the chain is on the extracellular side. The helical transmembrane segment at 82–102 (ALVTSLCGLFVFLSLGLVPPI) threads the bilayer. Residues 103-121 (RCLFVLSVPTLGSKQGRRL) lie on the Cytoplasmic side of the membrane. Residues 122-142 (LLSYSAANLAVAVVPNVLGNV) form a helical membrane-spanning segment. The Extracellular segment spans residues 143–226 (RAAGQVLSCV…LARAALGTQR (84 aa)). The helical transmembrane segment at 227–247 (VVTGLFLLGLLGESAWYLHRY) threads the bilayer. Residues 248 to 303 (LTDLRFDNIYATRQLVRQLAQAGATHLLTSPPPWLLQTAQPKLSREELLSCLLRLG) lie on the Cytoplasmic side of the membrane. The helical transmembrane segment at 304-324 (LLALLLVATAVTVASDYGAFL) threads the bilayer. At 325 to 401 (LAQAAVAWAQ…QAQPPRVTAA (77 aa)) the chain is on the extracellular side. Residues 402-422 (LAAGALQLLAGATLVLQAYAW) form a helical membrane-spanning segment. The Cytoplasmic portion of the chain corresponds to 423–498 (RLRHTIAASF…DSLGPPYDLE (76 aa)). The disordered stretch occupies residues 449–498 (QRRHNQSDHLNKQPGTMATRESRKPGQGTRTLESQGPQAHDSLGPPYDLE). Positions 476-485 (GTRTLESQGP) are enriched in polar residues.

In terms of tissue distribution, expressed in osteoclast (at protein level). Ubiquitous. Highly expressed in multi-nuclear osteoclast cells compared to mono-nuclear macrophages. Expressed in foreign body giant cells (FBGCs).

It localises to the membrane. Its function is as follows. Probable cell surface receptor that plays a role in cellular fusion and cell differentiation. Cooperates with DCSTAMP in modulating cell-cell fusion in both osteoclasts and foreign body giant cells (FBGCs). Involved in osteoclast bone resorption. Promotes osteoclast differentiation and may play a role in the multinucleated osteoclast maturation. The protein is Osteoclast stimulatory transmembrane protein (Ocstamp) of Mus musculus (Mouse).